The primary structure comprises 333 residues: MLAEKLQINSITPHPSVEYWSVCKVEALFETPFLELVYRATQVHRKHFNPRAIQLSTLMSIKTGGCPEDCSYCPQSARYHTGVQNQQLLDVDEIVAKAKIAKARGAGRFCMGAAWRGPKPKDIEKVTEIIKAVKSLGLETCGTFGLLQDGMAEDLKEAGLDYYNHNLDTAPEHYAEVIGTRRFDDRLSTLGKVRKAGLKVCCGGIVGMNETRKERAGLIASLANLDPQPESVPINQLVKVEGTPLADAEELDWTEFVRTIAVARITMPKSYVRLSAGRSGMTEEMQAMCFMAGANSIFYGDKLLVTDNPEEDGDQLLMAKLDLEPETAENKKL.

In terms of domain architecture, Radical SAM core spans 51–278 (RAIQLSTLMS…KSYVRLSAGR (228 aa)). 3 residues coordinate [4Fe-4S] cluster: C66, C70, and C73. C110, C141, C201, and R273 together coordinate [2Fe-2S] cluster.

It belongs to the radical SAM superfamily. Biotin synthase family. In terms of assembly, homodimer. It depends on [4Fe-4S] cluster as a cofactor. The cofactor is [2Fe-2S] cluster.

It catalyses the reaction (4R,5S)-dethiobiotin + (sulfur carrier)-SH + 2 reduced [2Fe-2S]-[ferredoxin] + 2 S-adenosyl-L-methionine = (sulfur carrier)-H + biotin + 2 5'-deoxyadenosine + 2 L-methionine + 2 oxidized [2Fe-2S]-[ferredoxin]. It functions in the pathway cofactor biosynthesis; biotin biosynthesis; biotin from 7,8-diaminononanoate: step 2/2. Its function is as follows. Catalyzes the conversion of dethiobiotin (DTB) to biotin by the insertion of a sulfur atom into dethiobiotin via a radical-based mechanism. The protein is Biotin synthase of Haemophilus influenzae (strain 86-028NP).